The sequence spans 455 residues: Bifunctional protein GlmU (455 aa).

Positions 1-226 (MSLDIVILAA…AMEVQGANDR (226 aa)) are pyrophosphorylase. Residues 8–11 (LAAG), Lys22, Gln73, 78–79 (GT), 99–101 (YGD), Gly136, Glu151, Asn166, and Asn224 contribute to the UDP-N-acetyl-alpha-D-glucosamine site. Residue Asp101 participates in Mg(2+) binding. Asn224 serves as a coordination point for Mg(2+). Residues 227–247 (KQLSELERHYQMREARRLMAA) are linker. Positions 248–455 (GVTLRDPARF…WKRPVKISKD (208 aa)) are N-acetyltransferase. Residues Arg330 and Lys348 each contribute to the UDP-N-acetyl-alpha-D-glucosamine site. His360 (proton acceptor) is an active-site residue. UDP-N-acetyl-alpha-D-glucosamine-binding residues include Tyr363 and Asn374. Acetyl-CoA contacts are provided by residues Ala377, 383–384 (NY), Ser402, Ala420, and Arg437.

The protein in the N-terminal section; belongs to the N-acetylglucosamine-1-phosphate uridyltransferase family. It in the C-terminal section; belongs to the transferase hexapeptide repeat family. In terms of assembly, homotrimer. Mg(2+) is required as a cofactor.

It localises to the cytoplasm. The enzyme catalyses alpha-D-glucosamine 1-phosphate + acetyl-CoA = N-acetyl-alpha-D-glucosamine 1-phosphate + CoA + H(+). The catalysed reaction is N-acetyl-alpha-D-glucosamine 1-phosphate + UTP + H(+) = UDP-N-acetyl-alpha-D-glucosamine + diphosphate. Its pathway is nucleotide-sugar biosynthesis; UDP-N-acetyl-alpha-D-glucosamine biosynthesis; N-acetyl-alpha-D-glucosamine 1-phosphate from alpha-D-glucosamine 6-phosphate (route II): step 2/2. It participates in nucleotide-sugar biosynthesis; UDP-N-acetyl-alpha-D-glucosamine biosynthesis; UDP-N-acetyl-alpha-D-glucosamine from N-acetyl-alpha-D-glucosamine 1-phosphate: step 1/1. The protein operates within bacterial outer membrane biogenesis; LPS lipid A biosynthesis. In terms of biological role, catalyzes the last two sequential reactions in the de novo biosynthetic pathway for UDP-N-acetylglucosamine (UDP-GlcNAc). The C-terminal domain catalyzes the transfer of acetyl group from acetyl coenzyme A to glucosamine-1-phosphate (GlcN-1-P) to produce N-acetylglucosamine-1-phosphate (GlcNAc-1-P), which is converted into UDP-GlcNAc by the transfer of uridine 5-monophosphate (from uridine 5-triphosphate), a reaction catalyzed by the N-terminal domain. The protein is Bifunctional protein GlmU of Pseudomonas syringae pv. syringae (strain B728a).